The sequence spans 211 residues: Large ribosomal subunit protein uL3 (211 aa).

This sequence belongs to the universal ribosomal protein uL3 family. As to quaternary structure, part of the 50S ribosomal subunit. Forms a cluster with proteins L14 and L19.

One of the primary rRNA binding proteins, it binds directly near the 3'-end of the 23S rRNA, where it nucleates assembly of the 50S subunit. This Desulfatibacillum aliphaticivorans protein is Large ribosomal subunit protein uL3.